A 1193-amino-acid chain; its full sequence is Protein diaphanous homolog 3 (1193 aa).

A compositionally biased stretch (basic residues) spans 1 to 10 (MERHQPRLHH). The segment at 1–57 (MERHQPRLHHPAQGSAAGTPYPSSASLRGCRESKMPRRKGPQHPPPPSGPEEPGEKR) is disordered. Ser-26 is subject to Phosphoserine. The Nuclear localization signal motif lies at 36-60 (PRRKGPQHPPPPSGPEEPGEKRPKF). The residue at position 68 (Thr-68) is a Phosphothreonine. Ser-77 and Ser-175 each carry phosphoserine. Residues 114 to 476 (PKPLSENELL…QIVLHRDGMD (363 aa)) enclose the GBD/FH3 domain. A coiled-coil region spans residues 497–554 (IDQAKLEEFEEKASELYKKFEKEFTDHQETQAELQKKEAKINELQAELQAFKSQFGAL). The segment at 558 to 622 (CNIPLPPSKE…PPPLGFLGGQ (65 aa)) is disordered. Residues 561-631 (PLPPSKEGGT…QNSPPLPILP (71 aa)) form the FH1 domain. Positions 575 to 600 (LPPPPPLPSGGGVPPPPPPPPPPPLP) are enriched in pro residues. The residue at position 624 (Ser-624) is a Phosphoserine. Residues 636–1034 (PKKEFKPEIS…EKRVRIAKEL (399 aa)) enclose the FH2 domain. Positions 1013–1056 (KENIKKREAEEKEKRVRIAKELAERERLERQQKKKRLLEMKTEG) form a coiled coil. The region spanning 1057 to 1087 (DETGVMDNLLEALQSGAAFRDRRKRTPMPKD) is the DAD domain. Phosphoserine occurs at positions 1093 and 1179. Residues 1184–1193 (EALLARLRAL) carry the Nuclear export signal motif.

Belongs to the formin homology family. Diaphanous subfamily. In terms of processing, ubiquitinated.

The protein resides in the cytoplasm. The protein localises to the nucleus. In terms of biological role, actin nucleation and elongation factor required for the assembly of F-actin structures, such as actin cables and stress fibers. Required for cytokinesis, stress fiber formation and transcriptional activation of the serum response factor. Binds to GTP-bound form of Rho and to profilin: acts in a Rho-dependent manner to recruit profilin to the membrane, where it promotes actin polymerization. DFR proteins couple Rho and Src tyrosine kinase during signaling and the regulation of actin dynamics. Also acts as an actin nucleation and elongation factor in the nucleus by promoting nuclear actin polymerization inside the nucleus to drive serum-dependent SRF-MRTFA activity. This is Protein diaphanous homolog 3 (DIAPH3) from Homo sapiens (Human).